Reading from the N-terminus, the 160-residue chain is MMERFEKIEMKIPAKAEYVAIIRLTMAGVANRMGFAYDDIEDMKIAISEACTNIVQHAYKEDVGEIAIVFGLYENRLEIMVADNGVSFDFNNLKRKVGPYDISKPVEHLPENGLGLYLINTLMDDIQIMHDEGMTVLMTKYIQREQVENDGNPISTYESY.

This sequence belongs to the anti-sigma-factor family.

The enzyme catalyses L-seryl-[protein] + ATP = O-phospho-L-seryl-[protein] + ADP + H(+). The catalysed reaction is L-threonyl-[protein] + ATP = O-phospho-L-threonyl-[protein] + ADP + H(+). Negative regulator of sigma-B activity. Phosphorylates and inactivates its specific antagonist protein, RsbV. Upon phosphorylation of RsbV, RsbW is released and binds to sigma-B, thereby blocking its ability to form an RNA polymerase holoenzyme (E-sigma-B). The polypeptide is Serine-protein kinase RsbW (Bacillus thuringiensis (strain Al Hakam)).